The following is a 255-amino-acid chain: Homeobox protein DLX-1 (255 aa).

Positions 1–14 are enriched in polar residues; the sequence is MTMTTMPESLNSPV. 2 disordered regions span residues 1 to 38 and 95 to 118; these read MTMT…MSHG and SLAQ…EGGE. The segment covering 25–36 has biased composition (low complexity); that stretch reads PPNQQMSPSPMS. Residues 100–112 are compositionally biased toward basic and acidic residues; sequence RLEDPGADSEKST. The segment at residues 128–187 is a DNA-binding region (homeobox); it reads IRKPRTIYSSLQLQALNRRFQQTQYLALPERAELAASLGLTQTQVKIWFQNKRSKFKKLM. The disordered stretch occupies residues 204-230; sequence ALSAGSPPVPPGWNPNSSSGKGSGGNA.

The protein belongs to the distal-less homeobox family. In terms of assembly, interacts with SMAD4 (via homeobox DNA-binding domain). Interacts (via homeobox DNA-binding domain) with POU4F2; this interaction suppresses DLX1-mediated transcriptional activity in postnatal retina and enhances retinal ganglion cell (RGC) differentiation. As to expression, expressed in hematopoietic cell lines.

The protein localises to the nucleus. In terms of biological role, plays a role as a transcriptional activator or repressor. Inhibits several cytokine signaling pathways, such as TGFB1, activin-A/INHBA and BMP4 by interfering with the transcriptional stimulatory activity of transcription factors, such as MSX2, FAST2, SMAD2 and SMAD3 during hematopoietic cell differentiation. Plays a role in terminal differentiation of interneurons, such as amacrine and bipolar cells in the developing retina. Likely to play a regulatory role in the development of the ventral forebrain. May play a role in craniofacial patterning and morphogenesis and may be involved in the early development of diencephalic subdivisions. The sequence is that of Homeobox protein DLX-1 (DLX1) from Homo sapiens (Human).